The primary structure comprises 302 residues: Recombination-associated protein RdgC (302 aa).

It belongs to the RdgC family.

The protein localises to the cytoplasm. It is found in the nucleoid. Its function is as follows. May be involved in recombination. This Xylella fastidiosa (strain 9a5c) protein is Recombination-associated protein RdgC.